We begin with the raw amino-acid sequence, 258 residues long: MLILISPAKTLDYQSPLPTTRYTLPELLDNSQQLIHEARKLTPPQISSLMRISDKLAGINAARFHDWQPDFTSENARQAILAFKGDVYTGLQAETFSEDDFDFAQQHLRMLSGLYGVLRPLDLMQPYRLEMGIRLENARGKDLYQFWGDIITNKLNEALAAQGDNVVINLASDEYFKSVKPKKLNAEIIKPVFLDEKNGKFKIISFYAKKARGLMSRFIIENRLTKPEQLTGFNSEGYFFDEASSSNGELVFKRYEQR.

Belongs to the UPF0246 family.

The sequence is that of UPF0246 protein YaaA from Escherichia coli (strain SMS-3-5 / SECEC).